A 259-amino-acid chain; its full sequence is Carbonic anhydrase 1 (259 aa).

At Ala-1 the chain carries N-acetylalanine. The Alpha-carbonic anhydrase domain maps to 2–258 (HAWGYGPTDG…LKGRHVRASF (257 aa)). The active-site Proton donor/acceptor is the His-63. The Zn(2+) site is built by His-93, His-95, and His-118. Residues Thr-197 and 197–198 (TT) contribute to the substrate site.

This sequence belongs to the alpha-carbonic anhydrase family. Zn(2+) serves as cofactor.

The protein localises to the cytoplasm. The enzyme catalyses hydrogencarbonate + H(+) = CO2 + H2O. Functionally, catalyzes the reversible hydration of carbon dioxide. The protein is Carbonic anhydrase 1 (ca1) of Chionodraco hamatus (Antarctic teleost icefish).